Here is a 352-residue protein sequence, read N- to C-terminus: Biotin synthase (352 aa).

The Radical SAM core domain occupies 44–262 (NRVQVSTLLS…LAVARILMPK (219 aa)). [4Fe-4S] cluster is bound by residues Cys59, Cys63, and Cys66. Residues Cys103, Cys134, Cys194, and Arg266 each contribute to the [2Fe-2S] cluster site.

This sequence belongs to the radical SAM superfamily. Biotin synthase family. As to quaternary structure, homodimer. It depends on [4Fe-4S] cluster as a cofactor. [2Fe-2S] cluster is required as a cofactor.

It catalyses the reaction (4R,5S)-dethiobiotin + (sulfur carrier)-SH + 2 reduced [2Fe-2S]-[ferredoxin] + 2 S-adenosyl-L-methionine = (sulfur carrier)-H + biotin + 2 5'-deoxyadenosine + 2 L-methionine + 2 oxidized [2Fe-2S]-[ferredoxin]. The protein operates within cofactor biosynthesis; biotin biosynthesis; biotin from 7,8-diaminononanoate: step 2/2. Its function is as follows. Catalyzes the conversion of dethiobiotin (DTB) to biotin by the insertion of a sulfur atom into dethiobiotin via a radical-based mechanism. This chain is Biotin synthase, found in Pseudomonas putida (strain ATCC 47054 / DSM 6125 / CFBP 8728 / NCIMB 11950 / KT2440).